The primary structure comprises 872 residues: TATA box-binding protein-associated factor RNA polymerase I subunit B (872 aa).

The segment at 6–40 (ETMQLENMHCDVCEGTTFQEREGFYYCVECGTQKD) adopts an RRN7-type zinc-finger fold. Positions 15, 18, 32, and 35 each coordinate Zn(2+). Positions 41 to 72 (QIRAVDITAEDNFDDTAAGRYTARTIRQKKDT) are B-reader. Positions 73 to 84 (EKEDEDDITSWE) are B-linker. The tract at residues 85–312 (FYNYVLRGFL…LPGNVAAKGK (228 aa)) is N-terminal cyclin fold. Positions 187–206 (DASGYRSHGGASESEGEQSL) are disordered.

The protein belongs to the RRN7/TAF1B family.

The protein localises to the nucleus. It is found in the nucleolus. Its function is as follows. Component of RNA polymerase I core factor complex that acts as a GTF2B/TFIIB-like factor and plays a key role in multiple steps during transcription initiation such as pre-initiation complex (PIC) assembly and postpolymerase recruitment events in polymerase I (Pol I) transcription. Binds rDNA promoters and plays a role in Pol I recruitment. This Drosophila melanogaster (Fruit fly) protein is TATA box-binding protein-associated factor RNA polymerase I subunit B.